The primary structure comprises 157 residues: Sorting nexin-3 (157 aa).

The disordered stretch occupies residues 1-21 (MSKPFQPISDVINTSPKNKSQ). A compositionally biased stretch (polar residues) spans 11-21 (VINTSPKNKSQ). A PX domain is found at 32–152 (NFLEIEVKNP…EFIQNEKWDP (121 aa)). A 1,2-diacyl-sn-glycero-3-phospho-(1D-myo-inositol-3-phosphate) contacts are provided by Arg-75, Ser-77, Lys-101, and Arg-117.

Belongs to the sorting nexin family.

The protein localises to the cytoplasm. It localises to the golgi apparatus membrane. It is found in the prevacuolar compartment membrane. In terms of biological role, required for retention of late Golgi membrane proteins. Component of the retrieval machinery that functions by direct interaction with the cytosolic tails of certain TGN membrane proteins during the sorting/budding process at the prevacuolar compartment. Binds phosphatidylinositol 3-phosphate (PtdIns(P3)). The sequence is that of Sorting nexin-3 (SNX3) from Candida albicans (strain SC5314 / ATCC MYA-2876) (Yeast).